The sequence spans 361 residues: Holliday junction branch migration complex subunit RuvB (361 aa).

A large ATPase domain (RuvB-L) region spans residues methionine 1–tyrosine 181. ATP is bound by residues leucine 20, arginine 21, glycine 62, lysine 65, threonine 66, threonine 67, glutamate 128–tyrosine 130, arginine 171, tyrosine 181, and arginine 218. Threonine 66 serves as a coordination point for Mg(2+). Positions threonine 182–glutamate 252 are small ATPAse domain (RuvB-S). Residues histidine 255–glutamate 361 form a head domain (RuvB-H) region. DNA-binding residues include arginine 291, arginine 310, and arginine 315.

The protein belongs to the RuvB family. In terms of assembly, homohexamer. Forms an RuvA(8)-RuvB(12)-Holliday junction (HJ) complex. HJ DNA is sandwiched between 2 RuvA tetramers; dsDNA enters through RuvA and exits via RuvB. An RuvB hexamer assembles on each DNA strand where it exits the tetramer. Each RuvB hexamer is contacted by two RuvA subunits (via domain III) on 2 adjacent RuvB subunits; this complex drives branch migration. In the full resolvosome a probable DNA-RuvA(4)-RuvB(12)-RuvC(2) complex forms which resolves the HJ.

The protein localises to the cytoplasm. The catalysed reaction is ATP + H2O = ADP + phosphate + H(+). The RuvA-RuvB-RuvC complex processes Holliday junction (HJ) DNA during genetic recombination and DNA repair, while the RuvA-RuvB complex plays an important role in the rescue of blocked DNA replication forks via replication fork reversal (RFR). RuvA specifically binds to HJ cruciform DNA, conferring on it an open structure. The RuvB hexamer acts as an ATP-dependent pump, pulling dsDNA into and through the RuvAB complex. RuvB forms 2 homohexamers on either side of HJ DNA bound by 1 or 2 RuvA tetramers; 4 subunits per hexamer contact DNA at a time. Coordinated motions by a converter formed by DNA-disengaged RuvB subunits stimulates ATP hydrolysis and nucleotide exchange. Immobilization of the converter enables RuvB to convert the ATP-contained energy into a lever motion, pulling 2 nucleotides of DNA out of the RuvA tetramer per ATP hydrolyzed, thus driving DNA branch migration. The RuvB motors rotate together with the DNA substrate, which together with the progressing nucleotide cycle form the mechanistic basis for DNA recombination by continuous HJ branch migration. Branch migration allows RuvC to scan DNA until it finds its consensus sequence, where it cleaves and resolves cruciform DNA. This chain is Holliday junction branch migration complex subunit RuvB, found in Bartonella quintana (strain Toulouse) (Rochalimaea quintana).